A 553-amino-acid polypeptide reads, in one-letter code: Protein PALS2 (553 aa).

L27 domains lie at 1–48 and 49–107; these read MQQV…EDSK and LEAV…YDSP. The region spanning 129–208 is the PDZ domain; that stretch reads ILGIHKKAGE…SVTLKILPSY (80 aa). The 70-residue stretch at 228–297 folds into the SH3 domain; that stretch reads VRQVFVKCHF…PSQFLEEKRK (70 aa). In terms of domain architecture, Guanylate kinase-like spans 351-538; it reads RKTLVLIGAQ…AFEKLQTAIE (188 aa). Tyr513 is modified (phosphotyrosine).

It belongs to the MAGUK family. As to quaternary structure, interacts with CADM1. Interacts with the LIN7 proteins.

Its subcellular location is the membrane. The protein is Protein PALS2 of Mus musculus (Mouse).